Consider the following 280-residue polypeptide: Phosphonates import ATP-binding protein PhnC 1 (280 aa).

The ABC transporter domain maps to 3–247 (FRLDAASVSY…LLRELYASES (245 aa)). ATP is bound at residue 36 to 43 (GPSGAGKT).

The protein belongs to the ABC transporter superfamily. Phosphonates importer (TC 3.A.1.9.1) family. As to quaternary structure, the complex is composed of two ATP-binding proteins (PhnC), two transmembrane proteins (PhnE) and a solute-binding protein (PhnD).

The protein resides in the cell inner membrane. The catalysed reaction is phosphonate(out) + ATP + H2O = phosphonate(in) + ADP + phosphate + H(+). Part of the ABC transporter complex PhnCDE involved in phosphonates import. Responsible for energy coupling to the transport system. This is Phosphonates import ATP-binding protein PhnC 1 from Cupriavidus necator (strain ATCC 17699 / DSM 428 / KCTC 22496 / NCIMB 10442 / H16 / Stanier 337) (Ralstonia eutropha).